Consider the following 196-residue polypeptide: Mitochondrial intermembrane space cysteine motif-containing protein MIX23 (196 aa).

The Cx14C motif motif lies at 99–114; that stretch reads CEKEAAEMKNETDQQC. The Cx13C motif signature appears at 178–192; the sequence is CEQNNDYLKEFTQFC.

Belongs to the MIX23 family.

The protein resides in the mitochondrion intermembrane space. Its function is as follows. Regulator of the mitochondrial protein import machinery that is localized in the mitochondrial intermembrane space (IMS) and facilitates the transport of proteins from the cytosol into the mitochondrial matrix. Not essential for mitochondrial protein import but induced and required when mitochondrial import is compromised. Stimulates or stabilizes the translocation into the mitochondria of proteins such as OXA1, ATP1 and COX12. The protein is Mitochondrial intermembrane space cysteine motif-containing protein MIX23 of Saccharomyces cerevisiae (strain ATCC 204508 / S288c) (Baker's yeast).